Reading from the N-terminus, the 725-residue chain is MGDEDWEAEINPHMSSYVPIFEKDRYSSGENGDNFNRTPTSSSEMDDGPSRRDHFMKSGFASGRNFGNRDAGESNKRDNTSTMGGFGVGKSFGNRGFSNSKFEDGDSSGFWRESSNDCEDNPTRNRGFSKRGGYRDGNNSEASGPSRRGGRSSFRGCRGGFGLGSPNNDLDPDECMQRTGGLFGSRRPALSGTGNGDTSQSRSGSGSERGGYKGLNEEVITGSGKNSWKSEAEGGESSDTQGPKVTYIPPPPPEDEDSIFAHYQTGISFDKYDTILVEVSGHDAPPAILTFEEANLCQTLNNNIAKAGYTKLTPVQKYSIPIILAGRDLMACAQTGSGKTAAFLLPILAHMMHDGITASCFKELQEPECIIVAPTRELVNQIYLEARKFSFGTCVRAVVIYGGTQLGHSIRQIVQGCNILCATPGRLMDIIGKEKIGLKQIKYLVLDEADRMLDMGFGPEMKKLISCPGMPSKEQRQTLMFSATFPEEIQRLAAEFLKSNYLFVAVGQVGGACRDVQQTVLQVGQFSKREKLVEILRNIGDERTMVFVETKKKADFIATFLCQEKISTTSIHGDREQREREQALGDFRCGKCPVLVATSVAARGLDIENVQHVINFDLPSTIDEYVHRIGRTGRCGNTGRAISFFDLESDNHLAQPLVKVLTDAQQDVPAWLEEIAFSTYIPGFSGSTRGNVFASVDTRKGKSSLNTAGFSSSQAPNPVDDESWD.

The tract at residues 1–251 (MGDEDWEAEI…GPKVTYIPPP (251 aa)) is disordered. Residues 28-43 (SGENGDNFNRTPTSSS) show a composition bias toward polar residues. Over residues 70–79 (DAGESNKRDN) the composition is skewed to basic and acidic residues. 2 stretches are compositionally biased toward low complexity: residues 143–156 (SGPS…SFRG) and 196–206 (GDTSQSRSGSG). Serine 223 and serine 227 each carry phosphoserine. The interval 229–248 (KSEAEGGESSDTQGPKVTYI) is interaction with RANBP9. Residues 289–317 (LTFEEANLCQTLNNNIAKAGYTKLTPVQK) carry the Q motif motif. The 184-residue stretch at 320–503 (IPIILAGRDL…AEFLKSNYLF (184 aa)) folds into the Helicase ATP-binding domain. An ATP-binding site is contributed by 333-340 (AQTGSGKT). The DEAD box signature appears at 447-450 (DEAD). The 146-residue stretch at 531–676 (KLVEILRNIG…DVPAWLEEIA (146 aa)) folds into the Helicase C-terminal domain. The segment at 702-725 (KSSLNTAGFSSSQAPNPVDDESWD) is disordered. Polar residues predominate over residues 703 to 716 (SSLNTAGFSSSQAP). The residue at position 723 (serine 723) is a Phosphoserine.

The protein belongs to the DEAD box helicase family. DDX4/VASA subfamily. Found in a mRNP complex, at least composed of TDRD1, TDRD6, TDRD7 and DDX4. Interacts with RANBP9. Interacts with RANBP10. Interacts with PIWIL2 and MAEL. Interacts with BMAL1 and CLOCK. Interacts with Tex19.1 and, probably, Tex19.2. Interacts with RBM46.

The protein resides in the cytoplasm. Its subcellular location is the perinuclear region. It catalyses the reaction ATP + H2O = ADP + phosphate + H(+). In terms of biological role, ATP-dependent RNA helicase required during spermatogenesis to repress transposable elements and preventing their mobilization, which is essential for the germline integrity. Acts via the piRNA metabolic process, which mediates the repression of transposable elements during meiosis by forming complexes composed of piRNAs and Piwi proteins and governs the methylation and subsequent repression of transposons. Involved in the secondary piRNAs metabolic process, the production of piRNAs in fetal male germ cells through a ping-pong amplification cycle. Required for PIWIL2 slicing-triggered piRNA biogenesis: helicase activity enables utilization of one of the slice cleavage fragments generated by PIWIL2 and processing these pre-piRNAs into piRNAs. This is Probable ATP-dependent RNA helicase DDX4 (DDX4) from Macaca fascicularis (Crab-eating macaque).